Reading from the N-terminus, the 359-residue chain is S-adenosylmethionine:tRNA ribosyltransferase-isomerase (359 aa).

The protein belongs to the QueA family. In terms of assembly, monomer.

Its subcellular location is the cytoplasm. It catalyses the reaction 7-aminomethyl-7-carbaguanosine(34) in tRNA + S-adenosyl-L-methionine = epoxyqueuosine(34) in tRNA + adenine + L-methionine + 2 H(+). The protein operates within tRNA modification; tRNA-queuosine biosynthesis. Functionally, transfers and isomerizes the ribose moiety from AdoMet to the 7-aminomethyl group of 7-deazaguanine (preQ1-tRNA) to give epoxyqueuosine (oQ-tRNA). This Synechococcus elongatus (strain ATCC 33912 / PCC 7942 / FACHB-805) (Anacystis nidulans R2) protein is S-adenosylmethionine:tRNA ribosyltransferase-isomerase.